Reading from the N-terminus, the 128-residue chain is Small nuclear ribonucleoprotein SmD3a (128 aa).

The Sm domain maps to isoleucine 7 to leucine 79. Positions glycine 90–arginine 128 are disordered. Gly residues predominate over residues threonine 112–glycine 121.

Belongs to the snRNP core protein family. Expressed in young seedlings, roots, leaves, flowers and immature siliques.

Its subcellular location is the cytoplasm. It localises to the cytosol. The protein resides in the nucleus. Functionally, core component of the spliceosomal U1, U2, U4 and U5 small nuclear ribonucleoproteins (snRNPs), the building blocks of the spliceosome. May play a minor role in the splicing of cellular pre-mRNAs. The protein is Small nuclear ribonucleoprotein SmD3a of Arabidopsis thaliana (Mouse-ear cress).